The following is a 2108-amino-acid chain: General negative regulator of transcription subunit 1 (2108 aa).

2 coiled-coil regions span residues 795 to 813 (NVTL…KSLT) and 1021 to 1046 (MQQH…QQQQ). The disordered stretch occupies residues 1323–1352 (QQQQLQKSRLNQPSQSAQPPGVNVPNPQGG). Over residues 1329-1339 (KSRLNQPSQSA) the composition is skewed to polar residues. Positions 1340–1352 (QPPGVNVPNPQGG) are enriched in low complexity. At Thr-2102 the chain carries Phosphothreonine.

It belongs to the CNOT1 family. In terms of assembly, forms a NOT protein complex that comprises NOT1, NOT2, NOT3, NOT4 and NOT5. Subunit of the 1.0 MDa CCR4-NOT core complex that contains CCR4, CAF1, NOT1, NOT2, NOT3, NOT4, NOT5, CAF40 and CAF130. In the complex interacts with CCR4, POP2, NOT2, NOT4 and NOT5. The core complex probably is part of a less characterized 1.9 MDa CCR4-NOT complex.

The protein localises to the cytoplasm. It localises to the nucleus. Acts as a component of the CCR4-NOT core complex, which in the nucleus seems to be a general transcription factor, and in the cytoplasm the major mRNA deadenylase involved in mRNA turnover. The NOT protein subcomplex negatively regulates the basal and activated transcription of many genes. Preferentially affects TC-type TATA element-dependent transcription. Could directly or indirectly inhibit component(s) of the general transcription machinery. The sequence is that of General negative regulator of transcription subunit 1 (CDC39) from Saccharomyces cerevisiae (strain ATCC 204508 / S288c) (Baker's yeast).